A 115-amino-acid polypeptide reads, in one-letter code: Variant surface glycoprotein ANTAT 1.8 (115 aa).

Asn-42 carries an N-linked (GlcNAc...) asparagine glycan. Asp-92 carries the GPI-anchor amidated aspartate lipid modification. A propeptide spans 93 to 115 (SSILVNKQLALSVVSAAFAALLF) (removed in mature form).

It localises to the cell membrane. In terms of biological role, VSG forms a coat on the surface of the parasite. The trypanosome evades the immune response of the host by expressing a series of antigenically distinct VSGs from an estimated 1000 VSG genes. The protein is Variant surface glycoprotein ANTAT 1.8 of Trypanosoma brucei brucei.